Reading from the N-terminus, the 327-residue chain is Ribonucleoside-diphosphate reductase small chain (327 aa).

Residues Asp-70, Glu-101, and His-104 each contribute to the Fe cation site. Tyr-108 is an active-site residue. Glu-164, Glu-198, and His-201 together coordinate Fe cation.

The protein belongs to the ribonucleoside diphosphate reductase small chain family. Heterotetramer composed of a homodimer of the large subunit (R1) and a homodimer of the small subunit (R2). Larger multisubunit protein complex are also active, composed of (R1)n(R2)n. It depends on Fe cation as a cofactor.

It catalyses the reaction a 2'-deoxyribonucleoside 5'-diphosphate + [thioredoxin]-disulfide + H2O = a ribonucleoside 5'-diphosphate + [thioredoxin]-dithiol. Ribonucleoside-diphosphate reductase holoenzyme provides the precursors necessary for viral DNA synthesis. Allows virus growth in non-dividing cells. Catalyzes the biosynthesis of deoxyribonucleotides from the corresponding ribonucleotides. This Ornithodoros (relapsing fever ticks) protein is Ribonucleoside-diphosphate reductase small chain.